The sequence spans 91 residues: Sec-independent protein translocase protein TatA (91 aa).

Residues 1-21 (MGIFDWKHWIVILIVVVLVFG) traverse the membrane as a helical segment. Residues 42–91 (AMNDDDKPAEQPAPQPQQAQAAPQGSPLNQPHTIDAQAHKVDEPIRKDQV) form a disordered region. The segment covering 51-65 (EQPAPQPQQAQAAPQ) has biased composition (low complexity). Over residues 78–91 (QAHKVDEPIRKDQV) the composition is skewed to basic and acidic residues.

This sequence belongs to the TatA/E family. The Tat system comprises two distinct complexes: a TatABC complex, containing multiple copies of TatA, TatB and TatC subunits, and a separate TatA complex, containing only TatA subunits. Substrates initially bind to the TatABC complex, which probably triggers association of the separate TatA complex to form the active translocon.

The protein resides in the cell inner membrane. Part of the twin-arginine translocation (Tat) system that transports large folded proteins containing a characteristic twin-arginine motif in their signal peptide across membranes. TatA could form the protein-conducting channel of the Tat system. This is Sec-independent protein translocase protein TatA from Pseudomonas savastanoi pv. phaseolicola (strain 1448A / Race 6) (Pseudomonas syringae pv. phaseolicola (strain 1448A / Race 6)).